Here is a 250-residue protein sequence, read N- to C-terminus: 2,3-bisphosphoglycerate-dependent phosphoglycerate mutase (250 aa).

Residues 10 to 17, 23 to 24, arginine 62, 89 to 92, lysine 100, 116 to 117, and 185 to 186 contribute to the substrate site; these read RHGESQWN, TG, ERHY, RR, and GN. Histidine 11 (tele-phosphohistidine intermediate) is an active-site residue. Glutamate 89 acts as the Proton donor/acceptor in catalysis.

Belongs to the phosphoglycerate mutase family. BPG-dependent PGAM subfamily. In terms of assembly, homodimer.

It catalyses the reaction (2R)-2-phosphoglycerate = (2R)-3-phosphoglycerate. The protein operates within carbohydrate degradation; glycolysis; pyruvate from D-glyceraldehyde 3-phosphate: step 3/5. Functionally, catalyzes the interconversion of 2-phosphoglycerate and 3-phosphoglycerate. This chain is 2,3-bisphosphoglycerate-dependent phosphoglycerate mutase, found in Yersinia pseudotuberculosis serotype IB (strain PB1/+).